We begin with the raw amino-acid sequence, 172 residues long: Large ribosomal subunit protein uL10 (172 aa).

This sequence belongs to the universal ribosomal protein uL10 family. In terms of assembly, part of the ribosomal stalk of the 50S ribosomal subunit. The N-terminus interacts with L11 and the large rRNA to form the base of the stalk. The C-terminus forms an elongated spine to which L12 dimers bind in a sequential fashion forming a multimeric L10(L12)X complex.

Forms part of the ribosomal stalk, playing a central role in the interaction of the ribosome with GTP-bound translation factors. The sequence is that of Large ribosomal subunit protein uL10 from Rhodopseudomonas palustris (strain HaA2).